A 58-amino-acid polypeptide reads, in one-letter code: T-cell receptor gamma alternate reading frame protein (58 aa).

Detected at low levels in the ductal cells of the salivary gland but not in the acinar cells (at protein level). Expressed in endometrium (at protein level). Expressed in epithelial cells within the acinar ducts of the prostate.

In Homo sapiens (Human), this protein is T-cell receptor gamma alternate reading frame protein.